A 93-amino-acid chain; its full sequence is C-C motif chemokine 17 (93 aa).

A signal peptide spans 1-23; sequence MMSLQMLLLAALLLGTSLQHASA. 2 cysteine pairs are disulfide-bonded: cysteine 33–cysteine 57 and cysteine 34–cysteine 73.

This sequence belongs to the intercrine beta (chemokine CC) family.

Its subcellular location is the secreted. Functionally, chemokine, which displays chemotactic activity for T lymphocytes, preferentially Th2 cells, but not monocytes or granulocytes. Therefore plays an important role in a wide range of inflammatory and immunological processes. Acts by binding to CCR4 at T-cell surface. Mediates GM-CSF/CSF2-driven pain and inflammation. In the brain, required to maintain the typical, highly branched morphology of hippocampal microglia under homeostatic conditions. May be important for the appropriate adaptation of microglial morphology and synaptic plasticity to acute lipopolysaccharide (LPS)-induced neuroinflammation. Plays a role in wound healing, mainly by inducing fibroblast migration into the wound. This chain is C-C motif chemokine 17 (Ccl17), found in Rattus norvegicus (Rat).